The sequence spans 183 residues: Ubiquitin carboxyl-terminal hydrolase 17-like protein 23 (183 aa).

The 104-residue stretch at 80-183 (AGLQNMGNTC…KACLPGHKQV (104 aa)) folds into the USP domain.

Belongs to the peptidase C19 family. USP17 subfamily.

It localises to the nucleus. It is found in the endoplasmic reticulum. The sequence is that of Ubiquitin carboxyl-terminal hydrolase 17-like protein 23 (USP17L23) from Homo sapiens (Human).